Here is a 245-residue protein sequence, read N- to C-terminus: 8-amino-3,8-dideoxy-manno-octulosonate cytidylyltransferase (245 aa).

Belongs to the KdsB family.

It is found in the cytoplasm. It catalyses the reaction 8-amino-3,8-dideoxy-alpha-D-manno-octulosonate + CTP = CMP-8-amino-3,8-dideoxy-alpha-D-manno-oct-2-ulosonate + diphosphate. It functions in the pathway bacterial outer membrane biogenesis; lipopolysaccharide biosynthesis. Activates KDO8N (a required 8-carbon sugar) for incorporation into bacterial lipopolysaccharide in the Shewanella genus. The sequence is that of 8-amino-3,8-dideoxy-manno-octulosonate cytidylyltransferase from Shewanella frigidimarina (strain NCIMB 400).